The primary structure comprises 492 residues: N-succinylglutamate 5-semialdehyde dehydrogenase (492 aa).

Residue 220 to 225 (GSANTG) participates in NAD(+) binding. Catalysis depends on residues Glu-243 and Cys-277.

The protein belongs to the aldehyde dehydrogenase family. AstD subfamily.

The enzyme catalyses N-succinyl-L-glutamate 5-semialdehyde + NAD(+) + H2O = N-succinyl-L-glutamate + NADH + 2 H(+). Its pathway is amino-acid degradation; L-arginine degradation via AST pathway; L-glutamate and succinate from L-arginine: step 4/5. Its function is as follows. Catalyzes the NAD-dependent reduction of succinylglutamate semialdehyde into succinylglutamate. This chain is N-succinylglutamate 5-semialdehyde dehydrogenase, found in Escherichia coli O6:H1 (strain CFT073 / ATCC 700928 / UPEC).